A 393-amino-acid polypeptide reads, in one-letter code: Methylthioribose kinase (393 aa).

Residues Asn-38, Lys-53, and 107–109 each bind ATP; that span reads EDL. Asp-225 serves as a coordination point for substrate. 242–244 contributes to the ATP binding site; sequence DPE. Arg-332 is a substrate binding site.

It belongs to the methylthioribose kinase family. As to quaternary structure, homodimer.

It catalyses the reaction 5-(methylsulfanyl)-D-ribose + ATP = 5-(methylsulfanyl)-alpha-D-ribose 1-phosphate + ADP + H(+). It functions in the pathway amino-acid biosynthesis; L-methionine biosynthesis via salvage pathway; S-methyl-5-thio-alpha-D-ribose 1-phosphate from S-methyl-5'-thioadenosine (hydrolase route): step 2/2. Catalyzes the phosphorylation of methylthioribose into methylthioribose-1-phosphate. In Bacillus cereus (strain ZK / E33L), this protein is Methylthioribose kinase.